A 707-amino-acid polypeptide reads, in one-letter code: Casein kinase 1-like protein HD16 (707 aa).

The tract at residues 19–67 (YDVQDADPAASPVSPAPRGRTGRRGGAAAGRGNKTVAEGGGRKALKPRG) is disordered. Residues 24–37 (ADPAASPVSPAPRG) show a composition bias toward low complexity. The region spanning 147-425 (YITDRKLGKG…KLISLFDGLI (279 aa)) is the Protein kinase domain. Residues 153–161 (LGKGGFGQV) and lysine 184 each bind ATP. Catalysis depends on aspartate 276, which acts as the Proton acceptor.

It belongs to the protein kinase superfamily. CK1 Ser/Thr protein kinase family. Casein kinase I subfamily. As to quaternary structure, monomer. Interacts with GHD7 (via C-terminus). Interacts with SLR1. In terms of processing, autophosphorylated. As to expression, expressed in roots, leaves and stems. Expressed in leaf vascular bundles, and proximal regions of the shoot and roots.

Its subcellular location is the cytoplasm. It is found in the nucleus. The enzyme catalyses L-seryl-[protein] + ATP = O-phospho-L-seryl-[protein] + ADP + H(+). It carries out the reaction L-threonyl-[protein] + ATP = O-phospho-L-threonyl-[protein] + ADP + H(+). Its function is as follows. Casein kinases are operationally defined by their preferential utilization of acidic proteins such as caseins as substrates. It can phosphorylate a large number of proteins. Can phosphorylate casein on threonine residues in vitro. Involved in the regulation of flowering time through gibberellin (GA) signaling, and independently of photoperiod. Phosphorylates the DELLA protein SLR1, stabilizing SLR1 protein and sustaining SLR1 activity as repressor of GA signaling. Required for normal development of male floral organs and grains, through modulation of GA signaling. Targeted and repressed by the homeobox protein HAZ1 during GA signaling. Can phosphorylate phosvitin and SLR1 in vitro. Is not required for clock function in either the presence or the absence of light signals. Involved in a genetic control pathway for photoperiodic flowering under long day (LD) conditions that includes HD1, GHD7, HD5 and HD2. Phosphorylates and activates GHD7, a major floral repressor under LD conditions. Phosphorylation of GHD7 enhances its function in the repression of EHD1, HD3A and HD3B/RFT1, and obviously delaying flowering. The polypeptide is Casein kinase 1-like protein HD16 (Oryza sativa subsp. japonica (Rice)).